We begin with the raw amino-acid sequence, 72 residues long: Crustacean hyperglycemic hormone A (72 aa).

The residue at position 1 (Q1) is a Pyrrolidone carboxylic acid. F3 carries the D-phenylalanine; in form CHHA-II modification. Disulfide bonds link C7/C43, C23/C39, and C26/C52. A Valine amide modification is found at V72.

In terms of processing, stereoinversion of L-Phe (in CHHA-I) to D-Phe (in CHHA-II).

The protein resides in the secreted. Its function is as follows. Hormone found in the sinus gland of isopods and decapods which controls the blood sugar level. Has a secretagogue action over the amylase released from the midgut gland. May act as a stress hormone and may be involved in the control of molting and reproduction. The protein is Crustacean hyperglycemic hormone A of Cherax destructor (Common yabby crayfish).